A 278-amino-acid polypeptide reads, in one-letter code: Putative ABC transporter ATP-binding protein MTBMA_c05830 (278 aa).

The region spanning 4-239 (IEAVNIRYTY…IDTIRGADLR (236 aa)) is the ABC transporter domain. 37 to 44 (GPNGAGKS) is an ATP binding site.

This sequence belongs to the ABC transporter superfamily.

It is found in the cell membrane. Its function is as follows. Probably part of an ABC transporter complex. Responsible for energy coupling to the transport system. This Methanothermobacter marburgensis (strain ATCC BAA-927 / DSM 2133 / JCM 14651 / NBRC 100331 / OCM 82 / Marburg) (Methanobacterium thermoautotrophicum) protein is Putative ABC transporter ATP-binding protein MTBMA_c05830.